A 264-amino-acid chain; its full sequence is H-2 class II histocompatibility antigen, E-B beta chain (264 aa).

Positions 1-26 (MVWLPRVPCVAAVILLLTVLSPPMAL) are cleaved as a signal peptide. A beta-1 region spans residues 27 to 121 (VRDSRPWFLE…ISDKFLVRRR (95 aa)). Residues 27 to 225 (VRDSRPWFLE…KAQSTSAQNK (199 aa)) are Extracellular-facing. 2 disulfides stabilise this stretch: Cys-38–Cys-106 and Cys-144–Cys-200. Asn-46 carries N-linked (GlcNAc...) asparagine glycosylation. Residues 122 to 225 (VEPTVTVYPT…KAQSTSAQNK (104 aa)) form a beta-2 region. Residues 124–214 (PTVTVYPTKT…PSLTDPVTVE (91 aa)) form the Ig-like C1-type domain. Residues 226 to 246 (MLSGVGGFVLGLLFLGAGLFI) form a helical membrane-spanning segment. The Cytoplasmic portion of the chain corresponds to 247–264 (YFRNQKGQSGLQPTGLLS).

Belongs to the MHC class II family. In terms of processing, ubiquitinated in immature dendritic cells leading to down-regulation of MHC class II.

The protein resides in the membrane. In Mus musculus (Mouse), this protein is H-2 class II histocompatibility antigen, E-B beta chain (H2-Eb1).